A 338-amino-acid chain; its full sequence is Glycerol-3-phosphate dehydrogenase [NAD(P)+] (338 aa).

The NADPH site is built by Trp14, Tyr50, and Lys110. 3 residues coordinate sn-glycerol 3-phosphate: Lys110, Gly141, and Ser143. Ala145 provides a ligand contact to NADPH. Sn-glycerol 3-phosphate contacts are provided by Lys196, Asp249, Ser259, Arg260, and Asn261. The active-site Proton acceptor is the Lys196. Arg260 provides a ligand contact to NADPH. An NADPH-binding site is contributed by Glu285.

This sequence belongs to the NAD-dependent glycerol-3-phosphate dehydrogenase family.

The protein localises to the cytoplasm. The catalysed reaction is sn-glycerol 3-phosphate + NAD(+) = dihydroxyacetone phosphate + NADH + H(+). It catalyses the reaction sn-glycerol 3-phosphate + NADP(+) = dihydroxyacetone phosphate + NADPH + H(+). It participates in membrane lipid metabolism; glycerophospholipid metabolism. Functionally, catalyzes the reduction of the glycolytic intermediate dihydroxyacetone phosphate (DHAP) to sn-glycerol 3-phosphate (G3P), the key precursor for phospholipid synthesis. This Malacoplasma penetrans (strain HF-2) (Mycoplasma penetrans) protein is Glycerol-3-phosphate dehydrogenase [NAD(P)+].